We begin with the raw amino-acid sequence, 456 residues long: Na(+)/H(+) antiporter NhaA 3 (456 aa).

The next 11 helical transmembrane spans lie at 32-52 (IEATSGAVLLLATVVALTLSN), 87-107 (GLMTLFFFIVALEIKREVVLG), 114-134 (MVALSVVAAAGGMLVPMGLYL), 145-165 (GWGVVMPTDTAFVIGCLALLG), 174-194 (VFLLSLAVVDDLAAILVVAVG), 202-222 (TALALGAVGLVIIRGMALLGV), 233-253 (AIIWLAVNASGIHATIVGVIL), 318-338 (WVAFGVMPLFALANAGVPITI), 347-367 (LAVMAGFVLGKPIGVTAFAWL), 382-402 (WGGLVGGALLTGIGFTMALFI), and 417-437 (LGILAASVVSSVAGLTLLCAL).

Belongs to the NhaA Na(+)/H(+) (TC 2.A.33) antiporter family.

Its subcellular location is the cell inner membrane. It carries out the reaction Na(+)(in) + 2 H(+)(out) = Na(+)(out) + 2 H(+)(in). Functionally, na(+)/H(+) antiporter that extrudes sodium in exchange for external protons. This chain is Na(+)/H(+) antiporter NhaA 3, found in Acidiphilium cryptum (strain JF-5).